The chain runs to 354 residues: Thiamine thiazole synthase 1, chloroplastic (354 aa).

The transit peptide at 1–43 (MATTAASSLLKSSFAGSRLPSATRAPSSVVVSTGGAPRTAAIS) directs the protein to the chloroplast. Residues Ala96, 116–117 (EQ), Gly124, and Val190 contribute to the substrate site. The residue at position 219 (Cys219) is a 2,3-didehydroalanine (Cys). Substrate-binding positions include Asp221, His236, Met288, and 298 to 300 (RMG).

It belongs to the THI4 family. As to quaternary structure, homooctamer. The cofactor is Fe cation. Post-translationally, during the catalytic reaction, a sulfide is transferred from Cys-219 to a reaction intermediate, generating a dehydroalanine residue.

The protein localises to the plastid. Its subcellular location is the chloroplast. It carries out the reaction [ADP-thiazole synthase]-L-cysteine + glycine + NAD(+) = [ADP-thiazole synthase]-dehydroalanine + ADP-5-ethyl-4-methylthiazole-2-carboxylate + nicotinamide + 3 H2O + 2 H(+). Involved in biosynthesis of the thiamine precursor thiazole. Catalyzes the conversion of NAD and glycine to adenosine diphosphate 5-(2-hydroxyethyl)-4-methylthiazole-2-carboxylic acid (ADT), an adenylated thiazole intermediate. The reaction includes an iron-dependent sulfide transfer from a conserved cysteine residue of the protein to a thiazole intermediate. The enzyme can only undergo a single turnover, which suggests it is a suicide enzyme. May have additional roles in adaptation to various stress conditions and in DNA damage tolerance. This chain is Thiamine thiazole synthase 1, chloroplastic, found in Sorghum bicolor (Sorghum).